Here is a 663-residue protein sequence, read N- to C-terminus: Probable acetolactate synthase 2, chloroplastic (663 aa).

A compositionally biased stretch (low complexity) spans 1–26 (MAAAAAAASLSVSDAAAKLPKPGGQV). A disordered region spans residues 1–56 (MAAAAAAASLSVSDAAAKLPKPGGQVQRRRDRDRPRVDAAACTRDSRRPTRERCST). Residues 1–79 (MAAAAAAASL…TPVRAPVRTR (79 aa)) constitute a chloroplast transit peptide. Composition is skewed to basic and acidic residues over residues 28–37 (RRRDRDRPRV) and 44–54 (RDSRRPTRERC). Glu-132 is a thiamine diphosphate binding site. Cys-152 and Cys-298 are disulfide-bonded. FAD is bound by residues Arg-234, 340 to 361 (HGTV…LGVR), and 383 to 402 (DIDP…ICAD). The segment at 478–558 (QHQMWATQHY…VKVMVLNNQH (81 aa)) is thiamine pyrophosphate binding. Mg(2+)-binding residues include Asp-529 and Asn-556.

Belongs to the TPP enzyme family. The cofactor is Mg(2+). Requires thiamine diphosphate as cofactor.

Its subcellular location is the plastid. It is found in the chloroplast. It carries out the reaction 2 pyruvate + H(+) = (2S)-2-acetolactate + CO2. It functions in the pathway amino-acid biosynthesis; L-isoleucine biosynthesis; L-isoleucine from 2-oxobutanoate: step 1/4. It participates in amino-acid biosynthesis; L-valine biosynthesis; L-valine from pyruvate: step 1/4. The chain is Probable acetolactate synthase 2, chloroplastic (ALS2) from Oryza sativa subsp. japonica (Rice).